Reading from the N-terminus, the 148-residue chain is SsrA-binding protein (148 aa).

This sequence belongs to the SmpB family.

The protein resides in the cytoplasm. Required for rescue of stalled ribosomes mediated by trans-translation. Binds to transfer-messenger RNA (tmRNA), required for stable association of tmRNA with ribosomes. tmRNA and SmpB together mimic tRNA shape, replacing the anticodon stem-loop with SmpB. tmRNA is encoded by the ssrA gene; the 2 termini fold to resemble tRNA(Ala) and it encodes a 'tag peptide', a short internal open reading frame. During trans-translation Ala-aminoacylated tmRNA acts like a tRNA, entering the A-site of stalled ribosomes, displacing the stalled mRNA. The ribosome then switches to translate the ORF on the tmRNA; the nascent peptide is terminated with the 'tag peptide' encoded by the tmRNA and targeted for degradation. The ribosome is freed to recommence translation, which seems to be the essential function of trans-translation. This chain is SsrA-binding protein, found in Ehrlichia ruminantium (strain Gardel).